The primary structure comprises 243 residues: MSLAFTLLTSKDNTDEDEEHLELSSFNQEKLLEMISVFLSRLTRLNDSKQEATESDQIPLSPTSLKNPCLIFSAKNVPSISIQAYLTRILKYCPATNDVFLSVLIYLDRIVHHFHFTVFINSFNIHRFLIAGFTAASKFFSDVFYTNSRYAKVGGIPLHELNHLELSFFVFNDFNLFISLEDLQAYGDLLLSWYRQNGQNYNPTDVSCSIESPISHTPQQNQQDEQPRRPIMDRRLLSSHSIG.

Residues 211–224 (ESPISHTPQQNQQD) show a composition bias toward polar residues. A disordered region spans residues 211 to 231 (ESPISHTPQQNQQDEQPRRPI).

Belongs to the cyclin family. PHO80 subfamily. As to quaternary structure, forms a cyclin-CDK complex with pef1.

It is found in the cytoplasm. Its subcellular location is the nucleus. Cyclin partner of the cyclin-dependent kinase (CDK) pef1 (PHO85 homolog). The sequence is that of PHO85 cyclin-like protein psl1 (psl1) from Schizosaccharomyces pombe (strain 972 / ATCC 24843) (Fission yeast).